A 742-amino-acid polypeptide reads, in one-letter code: Condensin complex subunit 2 (742 aa).

Disordered regions lie at residues 1-62, 151-172, 452-473, and 564-604; these read MKRA…FNSS, QQTE…KKER, FNSS…STER, and IQPH…PSSS. The segment covering 21 to 39 has biased composition (basic and acidic residues); the sequence is ALEKKRAKENSRKQRELRR. Polar residues predominate over residues 53-62; sequence LNNSSPFNSS. The segment covering 154–165 has biased composition (acidic residues); that stretch reads EEGEDAENDDED. Polar residues-rich tracts occupy residues 452 to 470 and 592 to 604; these read FNSS…SLSS and PKQT…PSSS.

Belongs to the CND2 (condensin subunit 2) family. In terms of assembly, component of the condensin complex, which contains the cut14/smc2 and cut3/smc2 heterodimer, and three non SMC subunits that probably regulate the complex: cnd1, cnd2 and cnd3.

It is found in the nucleus. It localises to the cytoplasm. The protein resides in the chromosome. Regulatory subunit of the condensin complex, a complex required for conversion of interphase chromatin into mitotic-like condense chromosomes. The condensin complex probably introduces positive supercoils into relaxed DNA in the presence of type I topoisomerases and converts nicked DNA into positive knotted forms in the presence of type II topoisomerases. The condensin complex probably also plays a role during interphase in processes such as DNA repair. This chain is Condensin complex subunit 2 (cnd2), found in Schizosaccharomyces pombe (strain 972 / ATCC 24843) (Fission yeast).